We begin with the raw amino-acid sequence, 152 residues long: Large ribosomal subunit protein uL15 (152 aa).

Residues 1-57 (MTSTLNTLKSNSGSRKKKLRKGRGIAAGQGASCGFGMRGQKSRSGRPTRPGFEGGQM) are disordered. Residues 14 to 23 (SRKKKLRKGR) show a composition bias toward basic residues. The span at 25–37 (IAAGQGASCGFGM) shows a compositional bias: gly residues.

The protein belongs to the universal ribosomal protein uL15 family. In terms of assembly, part of the 50S ribosomal subunit.

Functionally, binds to the 23S rRNA. The chain is Large ribosomal subunit protein uL15 from Prochlorococcus marinus (strain MIT 9301).